The primary structure comprises 397 residues: Phosphoglycerate kinase (397 aa).

Substrate is bound by residues 22 to 24, Arg-37, 60 to 63, Arg-119, and Arg-152; these read DLN and HFGR. Residues Lys-202, Glu-324, and 354-357 contribute to the ATP site; that span reads GGDT.

This sequence belongs to the phosphoglycerate kinase family. As to quaternary structure, monomer.

The protein localises to the cytoplasm. It carries out the reaction (2R)-3-phosphoglycerate + ATP = (2R)-3-phospho-glyceroyl phosphate + ADP. It participates in carbohydrate degradation; glycolysis; pyruvate from D-glyceraldehyde 3-phosphate: step 2/5. This chain is Phosphoglycerate kinase, found in Rhizorhabdus wittichii (strain DSM 6014 / CCUG 31198 / JCM 15750 / NBRC 105917 / EY 4224 / RW1) (Sphingomonas wittichii).